The chain runs to 421 residues: UDP-N-acetylglucosamine 1-carboxyvinyltransferase (421 aa).

Position 22 to 23 (Lys-22 to Asn-23) interacts with phosphoenolpyruvate. Arg-93 lines the UDP-N-acetyl-alpha-D-glucosamine pocket. Cys-117 (proton donor) is an active-site residue. Cys-117 carries the post-translational modification 2-(S-cysteinyl)pyruvic acid O-phosphothioketal. Residues Arg-122 to Leu-126, Asp-308, and Val-330 contribute to the UDP-N-acetyl-alpha-D-glucosamine site.

The protein belongs to the EPSP synthase family. MurA subfamily.

Its subcellular location is the cytoplasm. The catalysed reaction is phosphoenolpyruvate + UDP-N-acetyl-alpha-D-glucosamine = UDP-N-acetyl-3-O-(1-carboxyvinyl)-alpha-D-glucosamine + phosphate. It participates in cell wall biogenesis; peptidoglycan biosynthesis. Cell wall formation. Adds enolpyruvyl to UDP-N-acetylglucosamine. In Pseudomonas aeruginosa (strain LESB58), this protein is UDP-N-acetylglucosamine 1-carboxyvinyltransferase.